The sequence spans 59 residues: Large ribosomal subunit protein bL32 (59 aa).

The disordered stretch occupies residues 1 to 59; the sequence is MAVQQNKKSPSKRGMHRSHDALTAPALSVDSTTGEVHRPHHISPNGMYRGRKVVKAKGE. Positions 49–59 are enriched in basic residues; that stretch reads RGRKVVKAKGE.

It belongs to the bacterial ribosomal protein bL32 family.

This chain is Large ribosomal subunit protein bL32 (rpmF), found in Neisseria meningitidis serogroup B (strain ATCC BAA-335 / MC58).